A 384-amino-acid chain; its full sequence is MAKTVVLVVAAGRGRRFGGDLPKQYHDLAGRMVLRHTLAAFATNPEIGAVRAVIHPDDRQLYDMAAAGLNLLEPVHGGATRQDSVRLGLDSLKDLNPDKVLIHDGARPFIDHGTIGRVIRALDRHPGALPVVPVADTLKRGQDGFVADTVDRANLFRAQTPQGFRYAEIVAAHHAVIGNELTDDAAVAEKAGLAVELVNGAEDNVKITTGADLERARCLFDGPGEVRSASGYDVHRFDPAKDACWLCGVPVPHEAGLLGHSDADVGLHALTDAVLGAISAGDIGHHFPPTDARWKGAASDQFLAHAGSLVTAKGGRIVNVDVTIICERPKVGPHRAAMAARVAEILGISQDRVSVKATTTEGLGFTGRKEGIAAQAMASVWLPR.

Residues 1–226 (MAKTVVLVVA…RCLFDGPGEV (226 aa)) are 2-C-methyl-D-erythritol 4-phosphate cytidylyltransferase. The interval 227–384 (RSASGYDVHR…QAMASVWLPR (158 aa)) is 2-C-methyl-D-erythritol 2,4-cyclodiphosphate synthase. A divalent metal cation is bound by residues D233 and H235. 4-CDP-2-C-methyl-D-erythritol 2-phosphate-binding positions include 233-235 (DVH) and 260-261 (HS). Residue H268 participates in a divalent metal cation binding. 4-CDP-2-C-methyl-D-erythritol 2-phosphate contacts are provided by residues 282–284 (DIG), 358–361 (TTTE), F365, and R368.

It in the N-terminal section; belongs to the IspD/TarI cytidylyltransferase family. IspD subfamily. In the C-terminal section; belongs to the IspF family. Requires a divalent metal cation as cofactor.

It catalyses the reaction 2-C-methyl-D-erythritol 4-phosphate + CTP + H(+) = 4-CDP-2-C-methyl-D-erythritol + diphosphate. The enzyme catalyses 4-CDP-2-C-methyl-D-erythritol 2-phosphate = 2-C-methyl-D-erythritol 2,4-cyclic diphosphate + CMP. Its pathway is isoprenoid biosynthesis; isopentenyl diphosphate biosynthesis via DXP pathway; isopentenyl diphosphate from 1-deoxy-D-xylulose 5-phosphate: step 2/6. It participates in isoprenoid biosynthesis; isopentenyl diphosphate biosynthesis via DXP pathway; isopentenyl diphosphate from 1-deoxy-D-xylulose 5-phosphate: step 4/6. Its function is as follows. Bifunctional enzyme that catalyzes the formation of 4-diphosphocytidyl-2-C-methyl-D-erythritol from CTP and 2-C-methyl-D-erythritol 4-phosphate (MEP) (IspD), and catalyzes the conversion of 4-diphosphocytidyl-2-C-methyl-D-erythritol 2-phosphate (CDP-ME2P) to 2-C-methyl-D-erythritol 2,4-cyclodiphosphate (ME-CPP) with a corresponding release of cytidine 5-monophosphate (CMP) (IspF). This chain is Bifunctional enzyme IspD/IspF, found in Paramagnetospirillum magneticum (strain ATCC 700264 / AMB-1) (Magnetospirillum magneticum).